The chain runs to 202 residues: Tetranectin (202 aa).

Residues 1–21 form the signal peptide; it reads MGFWGTYLLFCLFSFLSQLTA. 3 disulfides stabilise this stretch: Cys-71-Cys-81, Cys-98-Cys-197, and Cys-173-Cys-189. Positions 77–198 constitute a C-type lectin domain; sequence VNLKCLLAFT…CRDQLPYICQ (122 aa).

Homotrimer. As to expression, highest expression in lung, skeletal muscle and heart. Expressed in retina.

It is found in the secreted. Functionally, tetranectin binds to plasminogen and to isolated kringle 4. May be involved in the packaging of molecules destined for exocytosis. Plays a role in retinal function. The chain is Tetranectin (Clec3b) from Mus musculus (Mouse).